The primary structure comprises 303 residues: Methyltransferase ktnA (303 aa).

The protein belongs to the class I-like SAM-binding methyltransferase superfamily. S-adenosyl-L-methionine is required as a cofactor.

In terms of biological role, non-reducing polyketide synthase; part of the gene cluster that mediates the biosynthesis of the bicoumarin kotanin. The non-reducing polyketide synthase ktnS first catalyzes the formation of the pentaketidic 4,7-dihydroxy-5-methylcoumarin from acetyl coenzyme A and 4 malonyl coenzyme A molecules. Further O-methylation by ktnB leads to the formation of 7-demethylsiderin. Then, an oxidative phenol coupling catalyzed by the cytochrome P450 monooxygenase ktnC forms the 8,8'-dimer P-orlandin via dimerization the monomeric precursor, 7-demethylsiderin. P-orlandin is subsequently O-methylated in a stepwise fashion to demethylkotanin and kotanin. The function of ktnA within the pathway has not been determined yet. The chain is Methyltransferase ktnA from Aspergillus niger (strain ATCC MYA-4892 / CBS 513.88 / FGSC A1513).